The primary structure comprises 108 residues: MSQESNDDSLGIDKLSVDYDYLLYKIADYVSSIEFQTNQICKRQNELITKDIVNGIVDENIKHFREILTKCEKLENYFDMLDQINMITENFKTRLAQVARDYKELQKP.

This sequence belongs to the BLOC1S4 family. Component of the biogenesis of lysosome-related organelles complex-1 (BLOC-1).

The protein resides in the cytoplasm. Functionally, component of the biogenesis of lysosome-related organelles complex-1 (BLOC-1), a complex that is involved in endosomal cargo sorting. This chain is Biogenesis of lysosome-related organelles complex 1 subunit CNL1 (CLN1), found in Zygosaccharomyces rouxii (strain ATCC 2623 / CBS 732 / NBRC 1130 / NCYC 568 / NRRL Y-229).